Here is a 434-residue protein sequence, read N- to C-terminus: Tubulin gamma chain (434 aa).

Residue 135–141 coordinates GTP; it reads AGGTGSG.

This sequence belongs to the tubulin family.

The protein localises to the cytoplasm. It localises to the cytoskeleton. Its subcellular location is the microtubule organizing center. It is found in the spindle pole body. In terms of biological role, tubulin is the major constituent of microtubules. The gamma chain is found at microtubule organizing centers (MTOC) such as the spindle poles or the centrosome, suggesting that it is involved in the minus-end nucleation of microtubule assembly. In Encephalitozoon cuniculi (strain GB-M1) (Microsporidian parasite), this protein is Tubulin gamma chain (TUB4).